The chain runs to 1603 residues: Pentafunctional AROM polypeptide (1603 aa).

Residues 1–384 are 3-dehydroquinate synthase; sequence MGVPTKISIL…YEPRASTVSN (384 aa). Residues 44 to 46, 81 to 84, 114 to 116, and Asp119 each bind NAD(+); these read DTN, ESSK, and GGV. 7-phospho-2-dehydro-3-deoxy-D-arabino-heptonate is bound at residue Arg130. 139 to 140 is an NAD(+) binding site; the sequence is TT. Residues Asp146 and Lys152 each contribute to the 7-phospho-2-dehydro-3-deoxy-D-arabino-heptonate site. Lys161 provides a ligand contact to NAD(+). Asn162 is a 7-phospho-2-dehydro-3-deoxy-D-arabino-heptonate binding site. NAD(+)-binding positions include 179 to 182 and Asn190; that span reads FLNT. Glu194 lines the Zn(2+) pocket. 7-phospho-2-dehydro-3-deoxy-D-arabino-heptonate is bound by residues 194–197 and Lys250; that span reads EVIK. Residue Glu260 is the Proton acceptor; for 3-dehydroquinate synthase activity of the active site. Residues 264–268 and His271 contribute to the 7-phospho-2-dehydro-3-deoxy-D-arabino-heptonate site; that span reads RNLLN. His271 contacts Zn(2+). Catalysis depends on His275, which acts as the Proton acceptor; for 3-dehydroquinate synthase activity. Positions 287 and 356 each coordinate 7-phospho-2-dehydro-3-deoxy-D-arabino-heptonate. His287 is a binding site for Zn(2+). The segment at 397–842 is EPSP synthase; that stretch reads VYPGFPKSLN…WNTLAQTFKV (446 aa). Residue Cys824 is the For EPSP synthase activity of the active site. Residues 872 to 1064 are shikimate kinase; the sequence is AASIFIIGMR…RRKENTFFVS (193 aa). Position 879–886 (879–886) interacts with ATP; that stretch reads GMRGAGKT. The segment at 1065–1285 is 3-dehydroquinase; that stretch reads LTFPDLTPAS…AAPGQLSARE (221 aa). Residue His1188 is the Proton acceptor; for 3-dehydroquinate dehydratase activity of the active site. The Schiff-base intermediate with substrate; for 3-dehydroquinate dehydratase activity role is filled by Lys1216. Residues 1298 to 1603 form a shikimate dehydrogenase region; that stretch reads AKKFAVIGKP…GVSSSDDTIS (306 aa).

This sequence in the N-terminal section; belongs to the sugar phosphate cyclases superfamily. Dehydroquinate synthase family. It in the 2nd section; belongs to the EPSP synthase family. In the 3rd section; belongs to the shikimate kinase family. The protein in the 4th section; belongs to the type-I 3-dehydroquinase family. This sequence in the C-terminal section; belongs to the shikimate dehydrogenase family. Homodimer. The cofactor is Zn(2+).

The protein resides in the cytoplasm. It catalyses the reaction 7-phospho-2-dehydro-3-deoxy-D-arabino-heptonate = 3-dehydroquinate + phosphate. The catalysed reaction is 3-dehydroquinate = 3-dehydroshikimate + H2O. It carries out the reaction shikimate + NADP(+) = 3-dehydroshikimate + NADPH + H(+). The enzyme catalyses shikimate + ATP = 3-phosphoshikimate + ADP + H(+). It catalyses the reaction 3-phosphoshikimate + phosphoenolpyruvate = 5-O-(1-carboxyvinyl)-3-phosphoshikimate + phosphate. The protein operates within metabolic intermediate biosynthesis; chorismate biosynthesis; chorismate from D-erythrose 4-phosphate and phosphoenolpyruvate: step 2/7. Its pathway is metabolic intermediate biosynthesis; chorismate biosynthesis; chorismate from D-erythrose 4-phosphate and phosphoenolpyruvate: step 3/7. It participates in metabolic intermediate biosynthesis; chorismate biosynthesis; chorismate from D-erythrose 4-phosphate and phosphoenolpyruvate: step 4/7. It functions in the pathway metabolic intermediate biosynthesis; chorismate biosynthesis; chorismate from D-erythrose 4-phosphate and phosphoenolpyruvate: step 5/7. The protein operates within metabolic intermediate biosynthesis; chorismate biosynthesis; chorismate from D-erythrose 4-phosphate and phosphoenolpyruvate: step 6/7. In terms of biological role, the AROM polypeptide catalyzes 5 consecutive enzymatic reactions in prechorismate polyaromatic amino acid biosynthesis. This chain is Pentafunctional AROM polypeptide, found in Paracoccidioides brasiliensis (strain Pb03).